A 674-amino-acid chain; its full sequence is MSRKNSKKLKVYYLPVTLTQFQKDLSEILISLHAKSFKASIIGEPQADAVNKPSGLPAGPETHPYPTLSQRQLTYIFDSNIRAIANHPSLLVDHYMPRQLLRMEPTESSIAGSHKFQVLNQLINSICFRDREGSPNEVIKCAIIAHSIKELDLLEGLILGKKFRTKRLSGTSLYNEKHKFPNLPTVDSTINKDGTPNSVSSTSSNSNSTSYTGYSKDDYDYSVKRNLKKRKINTDDWLFLATTKHLKHDQYLLANYDIDMIISFDPMLEVELPALQVLRNNANKDIPIIKLLVQNSPDHYLLDSEIKNSSVKSSHLSNNGHVDDSQEYEEIKSSLLYFLQARNAPVNNCEIDYIKLVKCCLEGKDCNNILPVLDLITLDEASKDSSDSGFWQPQLTKLQYSSTELPLWDGPLDIKTYQTELMHRAVIRLRDIQDEYAKGTVPLYEKRLNETQRQNQLDEIKNSVGLTFKKKQEVEKSINDSEKRLKHAMTESTKLQNKINHLLKNRQELENFNKLPSNTISSENHLEEGSALADKLKEYIDKNATLFNKLKELQQANAEKSKLNDELRSKYQIESSKAAESAQTLKILQESMKSLENEVNGPLTKFSTESLKKELERLQNDFQSLKARNKFLKNYITLMNRQYDLKNKNNVQVEKAAANGTRFRSTRSNTPNYT.

Positions threonine 185 to proline 196 are enriched in polar residues. Positions threonine 185 to tyrosine 211 are disordered. A compositionally biased stretch (low complexity) spans asparagine 197 to tyrosine 211. A coiled-coil region spans residues phenylalanine 468–threonine 637.

This sequence belongs to the HDA2/3 family. HDA2 subfamily. As to quaternary structure, heterodimer with HDA3. Component of the HDA1 histone deacetylase complex composed of at least one HDA1 homodimer and one HDA2/HDA3 heterodimer. Interacts with HDA1 and HDA3.

The protein localises to the nucleus. Required for activity of HDA1 histone deacetylase complex. The HDA1 histone deacetylase complex is responsible for the deacetylation of lysine residues on the N-terminal part of the core histones (H2A, H2B, H3 and H4). Histone deacetylation gives a tag for epigenetic repression and plays an important role in transcriptional regulation, cell cycle progression and developmental events. This Saccharomyces cerevisiae (strain ATCC 204508 / S288c) (Baker's yeast) protein is HDA1 complex subunit 2 (HDA2).